The following is a 394-amino-acid chain: Protein LAX PANICLE 2 (394 aa).

The tract at residues 1–193 (MVPARSLAHP…PTPRHHHHDV (193 aa)) is disordered. The segment covering 8–20 (AHPHPHLVRRRRD) has biased composition (basic residues). Residues 60–84 (QHDPPKQPPPREADDDHHRIQEREP) are compositionally biased toward basic and acidic residues. Low complexity-rich tracts occupy residues 90–101 (TTTRNQRLQLQL), 119–131 (GTSG…SSSN), and 146–155 (GPASPGASAG). Over residues 170-185 (APQPPTPTPTPTPTPT) the composition is skewed to pro residues.

Interacts with LAX1.

It localises to the nucleus. Functionally, involved in the regulation of shoot branching by controlling axillary meristem (AM) formation. Functions in association with LAX1 to regulate the process of AM formation. Possesses transactivation activity in yeast. The polypeptide is Protein LAX PANICLE 2 (Oryza sativa subsp. japonica (Rice)).